We begin with the raw amino-acid sequence, 695 residues long: Pre-mRNA-splicing factor CLF1 (695 aa).

HAT repeat units lie at residues 41-73, 75-107, 109-141, 143-174, 176-207, 296-328, 333-365, 375-412, 414-445, 447-479, 521-553, and 591-629; these read DVQR…FEIE, HDMR…SELK, GYIN…VEES, AHFD…FEVR, ERYE…FEVR, TIIL…LLEN, LVME…IWIK, NDIP…FEIR, DNLE…LETK, REFD…FEDS, QNFD…KKLT, and NNKD…FEGQ.

It belongs to the crooked-neck family. In terms of assembly, associated with the spliceosome.

It is found in the nucleus. Involved in pre-mRNA splicing and cell cycle progression. Required for the spliceosome assembly and initiation of the DNA replication. The polypeptide is Pre-mRNA-splicing factor CLF1 (CLF1) (Candida glabrata (strain ATCC 2001 / BCRC 20586 / JCM 3761 / NBRC 0622 / NRRL Y-65 / CBS 138) (Yeast)).